The primary structure comprises 229 residues: Cytochrome c oxidase subunit 2 (229 aa).

Residues 1 to 14 lie on the Mitochondrial intermembrane side of the membrane; that stretch reads MANHLQFNFQDATS. The helical transmembrane segment at 15–45 threads the bilayer; it reads PLMQELVKFHDHSLTILFFISALILYVLMMT. The Mitochondrial matrix portion of the chain corresponds to 46 to 59; it reads SLSKLTNKNILDSQ. A helical membrane pass occupies residues 60-87; the sequence is EIEMVWTVIPAFILIMLALPSIQILYLM. The Mitochondrial intermembrane segment spans residues 88 to 229; the sequence is DEIASPDITI…FESWIIKLSL (142 aa). Positions 162, 197, 199, 201, 205, and 208 each coordinate Cu cation. Mg(2+) is bound at residue E199.

It belongs to the cytochrome c oxidase subunit 2 family. As to quaternary structure, component of the cytochrome c oxidase (complex IV, CIV), a multisubunit enzyme composed of 14 subunits. The complex is composed of a catalytic core of 3 subunits MT-CO1, MT-CO2 and MT-CO3, encoded in the mitochondrial DNA, and 11 supernumerary subunits COX4I, COX5A, COX5B, COX6A, COX6B, COX6C, COX7A, COX7B, COX7C, COX8 and NDUFA4, which are encoded in the nuclear genome. The complex exists as a monomer or a dimer and forms supercomplexes (SCs) in the inner mitochondrial membrane with NADH-ubiquinone oxidoreductase (complex I, CI) and ubiquinol-cytochrome c oxidoreductase (cytochrome b-c1 complex, complex III, CIII), resulting in different assemblies (supercomplex SCI(1)III(2)IV(1) and megacomplex MCI(2)III(2)IV(2)). Found in a complex with TMEM177, COA6, COX18, COX20, SCO1 and SCO2. Interacts with TMEM177 in a COX20-dependent manner. Interacts with COX20. Interacts with COX16. It depends on Cu cation as a cofactor.

The protein localises to the mitochondrion inner membrane. It carries out the reaction 4 Fe(II)-[cytochrome c] + O2 + 8 H(+)(in) = 4 Fe(III)-[cytochrome c] + 2 H2O + 4 H(+)(out). Functionally, component of the cytochrome c oxidase, the last enzyme in the mitochondrial electron transport chain which drives oxidative phosphorylation. The respiratory chain contains 3 multisubunit complexes succinate dehydrogenase (complex II, CII), ubiquinol-cytochrome c oxidoreductase (cytochrome b-c1 complex, complex III, CIII) and cytochrome c oxidase (complex IV, CIV), that cooperate to transfer electrons derived from NADH and succinate to molecular oxygen, creating an electrochemical gradient over the inner membrane that drives transmembrane transport and the ATP synthase. Cytochrome c oxidase is the component of the respiratory chain that catalyzes the reduction of oxygen to water. Electrons originating from reduced cytochrome c in the intermembrane space (IMS) are transferred via the dinuclear copper A center (CU(A)) of subunit 2 and heme A of subunit 1 to the active site in subunit 1, a binuclear center (BNC) formed by heme A3 and copper B (CU(B)). The BNC reduces molecular oxygen to 2 water molecules using 4 electrons from cytochrome c in the IMS and 4 protons from the mitochondrial matrix. The protein is Cytochrome c oxidase subunit 2 (MT-CO2) of Myxine glutinosa (Atlantic hagfish).